Here is a 124-residue protein sequence, read N- to C-terminus: Small ribosomal subunit protein uS12 (124 aa).

The residue at position 89 (Asp89) is a 3-methylthioaspartic acid.

This sequence belongs to the universal ribosomal protein uS12 family. As to quaternary structure, part of the 30S ribosomal subunit. Contacts proteins S8 and S17. May interact with IF1 in the 30S initiation complex.

In terms of biological role, with S4 and S5 plays an important role in translational accuracy. Its function is as follows. Interacts with and stabilizes bases of the 16S rRNA that are involved in tRNA selection in the A site and with the mRNA backbone. Located at the interface of the 30S and 50S subunits, it traverses the body of the 30S subunit contacting proteins on the other side and probably holding the rRNA structure together. The combined cluster of proteins S8, S12 and S17 appears to hold together the shoulder and platform of the 30S subunit. The protein is Small ribosomal subunit protein uS12 of Thermoanaerobacter pseudethanolicus (strain ATCC 33223 / 39E) (Clostridium thermohydrosulfuricum).